Reading from the N-terminus, the 459-residue chain is tRNA-2-methylthio-N(6)-dimethylallyladenosine synthase (459 aa).

The 116-residue stretch at 1–116 folds into the MTTase N-terminal domain; it reads MRAHLITYGC…IGKALETNER (116 aa). [4Fe-4S] cluster-binding residues include cysteine 10, cysteine 46, cysteine 79, cysteine 148, cysteine 152, and cysteine 155. A Radical SAM core domain is found at 134-367; sequence PQGKLQAHLT…IAKQKEWSAR (234 aa). In terms of domain architecture, TRAM spans 370-433; sequence AAKVGTIQEV…PHMLYGRLIG (64 aa).

The protein belongs to the methylthiotransferase family. MiaB subfamily. Monomer. [4Fe-4S] cluster is required as a cofactor.

It localises to the cytoplasm. The enzyme catalyses N(6)-dimethylallyladenosine(37) in tRNA + (sulfur carrier)-SH + AH2 + 2 S-adenosyl-L-methionine = 2-methylsulfanyl-N(6)-dimethylallyladenosine(37) in tRNA + (sulfur carrier)-H + 5'-deoxyadenosine + L-methionine + A + S-adenosyl-L-homocysteine + 2 H(+). Functionally, catalyzes the methylthiolation of N6-(dimethylallyl)adenosine (i(6)A), leading to the formation of 2-methylthio-N6-(dimethylallyl)adenosine (ms(2)i(6)A) at position 37 in tRNAs that read codons beginning with uridine. This Deinococcus geothermalis (strain DSM 11300 / CIP 105573 / AG-3a) protein is tRNA-2-methylthio-N(6)-dimethylallyladenosine synthase.